Reading from the N-terminus, the 204-residue chain is Thioredoxin-like 4, chloroplastic (204 aa).

A chloroplast-targeting transit peptide spans 1 to 27 (MSSLLNISHCSYHGYSGLTSRGGINTV). The Thioredoxin domain maps to 63-201 (AKSLSQENLV…IDAAILKYTS (139 aa)). Catalysis depends on nucleophile residues cysteine 119 and cysteine 122. Residues cysteine 119 and cysteine 122 are joined by a disulfide bond.

Belongs to the thioredoxin family.

Its subcellular location is the plastid. The protein localises to the chloroplast. Functionally, probable thiol-disulfide oxidoreductase that may participate in various redox reactions. This Arabidopsis thaliana (Mouse-ear cress) protein is Thioredoxin-like 4, chloroplastic.